A 211-amino-acid polypeptide reads, in one-letter code: Large ribosomal subunit protein uL3 (211 aa).

The tract at residues 134 to 155 (ATHGNSLSHRAPGSIGQNQTPG) is disordered. Gln-152 bears the N5-methylglutamine mark.

Belongs to the universal ribosomal protein uL3 family. In terms of assembly, part of the 50S ribosomal subunit. Forms a cluster with proteins L14 and L19. Methylated by PrmB.

Its function is as follows. One of the primary rRNA binding proteins, it binds directly near the 3'-end of the 23S rRNA, where it nucleates assembly of the 50S subunit. The chain is Large ribosomal subunit protein uL3 from Methylococcus capsulatus (strain ATCC 33009 / NCIMB 11132 / Bath).